A 375-amino-acid chain; its full sequence is Homeobox protein Meis3 (375 aa).

The disordered stretch occupies residues Pro-25–Asp-51. Residues Val-31–Pro-46 are compositionally biased toward pro residues. Residues Gly-96–Asp-179 form the MEIS N-terminal domain. Disordered regions lie at residues Pro-197–Ile-268 and Asn-329–Thr-348. The span at Ser-227–Asp-241 shows a compositional bias: low complexity. Positions Arg-262–Met-324 form a DNA-binding region, homeobox; TALE-type.

It belongs to the TALE/MEIS homeobox family.

It localises to the nucleus. Transcriptional regulator which directly modulates PDPK1 expression, thus promoting survival of pancreatic beta-cells. Also regulates expression of NDFIP1, BNIP3, and CCNG1. The protein is Homeobox protein Meis3 (MEIS3) of Homo sapiens (Human).